The sequence spans 645 residues: Fructose-1,6-bisphosphatase class 3 (645 aa).

The protein belongs to the FBPase class 3 family. The cofactor is Mn(2+).

The enzyme catalyses beta-D-fructose 1,6-bisphosphate + H2O = beta-D-fructose 6-phosphate + phosphate. It participates in carbohydrate biosynthesis; gluconeogenesis. The protein is Fructose-1,6-bisphosphatase class 3 of Fusobacterium nucleatum subsp. nucleatum (strain ATCC 25586 / DSM 15643 / BCRC 10681 / CIP 101130 / JCM 8532 / KCTC 2640 / LMG 13131 / VPI 4355).